Reading from the N-terminus, the 887-residue chain is CWF19-like protein 2 (887 aa).

The tract at residues 1 to 143 is disordered; that stretch reads MEAFSVRFES…DKRTEEECDS (143 aa). Positions 11-103 form a coiled coil; the sequence is ASSIEERKEQ…KKQKCQKQSE (93 aa). Over residues 14-72 the composition is skewed to basic and acidic residues; it reads IEERKEQTRNARAEVLRQAKHNFEKEQRGEERKRLRDEDTWMLPDVHERIEQFSQEHSE. The residue at position 71 (Ser-71) is a Phosphoserine. Over residues 73-98 the composition is skewed to basic residues; the sequence is KKKKKKDKHSKKVKKEKKKKRKKQKC. Residues 99 to 110 show a composition bias toward low complexity; it reads QKQSESTDSSAS. Over residues 124-143 the composition is skewed to basic and acidic residues; that stretch reads SDKEKTWKVKDKRTEEECDS. Residues 164 to 254 are a coiled coil; sequence SSSLKAEKET…RNFEDIVAEK (91 aa). A Glycyl lysine isopeptide (Lys-Gly) (interchain with G-Cter in SUMO2) cross-link involves residue Lys-168. Disordered regions lie at residues 315–370 and 405–447; these read LEME…DEDE and SEES…GRRE. The segment covering 342–352 has biased composition (basic and acidic residues); sequence CRRESALRKNQ. Phosphoserine is present on residues Ser-354 and Ser-366. The span at 414 to 430 shows a compositional bias: basic and acidic residues; that stretch reads RSDRRQENRKPSDKKPL. Positions 433 to 442 are enriched in polar residues; it reads WSYNANQHST. A Phosphoserine modification is found at Ser-478. The stretch at 495–524 forms a coiled coil; it reads IKAEMMGNMELAEQLKAQLKEANKFKETQM. A Glycyl lysine isopeptide (Lys-Gly) (interchain with G-Cter in SUMO2) cross-link involves residue Lys-597. Ser-622 is subject to Phosphoserine.

Belongs to the CWF19 family.

The chain is CWF19-like protein 2 (Cwf19l2) from Mus musculus (Mouse).